The chain runs to 62 residues: Sperm protamine P1 (62 aa).

The segment at 1–62 is disordered; the sequence is MARYRHSRSR…RYSRRRRRRY (62 aa).

It belongs to the protamine P1 family. Testis.

Its subcellular location is the nucleus. The protein localises to the chromosome. In terms of biological role, protamines substitute for histones in the chromatin of sperm during the haploid phase of spermatogenesis. They compact sperm DNA into a highly condensed, stable and inactive complex. This chain is Sperm protamine P1 (PRM1), found in Wallabia bicolor (Swamp wallaby).